The sequence spans 587 residues: Arginine--tRNA ligase (587 aa).

A 'HIGH' region motif is present at residues 127-137 (PNLAKEMHVGH).

Belongs to the class-I aminoacyl-tRNA synthetase family. In terms of assembly, monomer.

It is found in the cytoplasm. The catalysed reaction is tRNA(Arg) + L-arginine + ATP = L-arginyl-tRNA(Arg) + AMP + diphosphate. This chain is Arginine--tRNA ligase, found in Pseudomonas paraeruginosa (strain DSM 24068 / PA7) (Pseudomonas aeruginosa (strain PA7)).